The primary structure comprises 75 residues: Small ribosomal subunit protein eS28 (75 aa).

This sequence belongs to the eukaryotic ribosomal protein eS28 family.

The polypeptide is Small ribosomal subunit protein eS28 (Natronomonas pharaonis (strain ATCC 35678 / DSM 2160 / CIP 103997 / JCM 8858 / NBRC 14720 / NCIMB 2260 / Gabara) (Halobacterium pharaonis)).